We begin with the raw amino-acid sequence, 159 residues long: Small ribosomal subunit protein uS9 (159 aa).

Belongs to the universal ribosomal protein uS9 family.

This chain is Small ribosomal subunit protein uS9, found in Rickettsia africae (strain ESF-5).